Here is a 786-residue protein sequence, read N- to C-terminus: MATTKQKVTAPSSSTAPCCPSTSILRREATAAVAGVGDGLQNWNNVPSVDDKQKKTASSALASLASTEPLSSNTSTKGIQIMTRAQTCHPLDPLSAAEISVAVATVRAAGETPEVRDGMRFIEVVLLEPDKSVVALADAYFFPPFQSSLMPRTKGGSLIPTKLPPRRARLIVYNKKTNETSIWIVELNEVHAAARGGHHRGKVISSNVVPDVQPPIDAQEYAECEAVVKSYPPFRDAMRRRGIDDLDLVMVDPWCVGYHSEADAPSRRLAKPLVFCRTESDCPMENGYARPVEGIYVLVDVQNMQIIEFEDRKLVPLPPADPLRNYTAGETRGGVDRSDVKPLHIIQPEGPSFRISGNYIEWQKWNFRIGFTPREGLVIHSVAYLDGSRGRRPIAHRLSFVEMVVPYGDPNDPHYRKNAFDAGEDGLGKNAHSLKRGCDCLGYIKYFDAHFTNFTGGVETTENCVCLHEEDHGMLWKHQDWRTGLAEVRRSRRLTVSFVCTVANYEYAFYWHFYQDGKIEAEVKLTGILSLGALQPGEYRKYGTTILPGLYAPVHQHFFVARMNMAVDCKPGEAHNQVVEVNVKVEEPGKENVHNNAFYAEETLLRSELQAMRDCDPFSARHWIVRNTRTVNRTGQLTGYKLVPGPNCLPLAGPEAKFLRRAAFLKHNLWVTQYAPGEEFPGGEFPNQNPRVGEGLASWVKQDRPLEESDIVLWYIFGITHVPRLEDWPVMPVEHIGFVLQPHGFFNCSPAVDVPPPSACDSESRDSDVTETSVAKSTATSLLAKL.

Residue 419-430 (AFDAGEDGLGKN) coordinates substrate. Residue Asp-421 is the Proton acceptor of the active site. An intrachain disulfide couples Cys-440 to Cys-466. Position 502-507 (502-507 (VANYEY)) interacts with substrate. Tyr-505 acts as the Schiff-base intermediate with substrate; via topaquinone in catalysis. Tyr-505 carries the post-translational modification 2',4',5'-topaquinone. 2 residues coordinate Cu cation: His-555 and His-557. Residues Asp-710 and Ile-711 each contribute to the Mn(2+) site. His-721 contacts Cu cation.

This sequence belongs to the copper/topaquinone oxidase family. In terms of assembly, homodimer. It depends on Cu cation as a cofactor. Zn(2+) serves as cofactor. The cofactor is L-topaquinone. Topaquinone (TPQ) is generated by copper-dependent autoxidation of a specific tyrosyl residue. In terms of tissue distribution, mainly expressed in roots, and, to a lower extent, in leaves and stems.

It localises to the peroxisome. The catalysed reaction is a primary methyl amine + O2 + H2O = an aldehyde + H2O2 + NH4(+). It carries out the reaction N-methylputrescine + O2 + H2O = 4-methylaminobutanal + H2O2 + NH4(+). It participates in alkaloid biosynthesis; nicotine biosynthesis. The protein operates within amine and polyamine degradation; putrescine degradation. In terms of biological role, involved in putrescine catabolism in peroxisomes. May also be involved in the biosynthesis of pyridine alkaloid natural products, leading mainly to the production of anabasine, anatabine, nicotine and nornicotine, effective deterrents against herbivores with antiparasitic and pesticide properties (neurotoxins); nornicotine serves as the precursor in the synthesis of the carcinogen compound N'-nitrosonornicotine (NNN). Oxidizes preferentially non-N-methylated amines. This is Diamine oxidase [copper-containing] 1, peroxisomal from Nicotiana tabacum (Common tobacco).